Consider the following 334-residue polypeptide: MSSAEVTAAAKPADAPEHCPGTASESAGKASACAGCPNQQICATGPKGPDPSIALVKEKLREVRNKVLVLSGKGGVGKSTVTALLSRAMAQHNPDRNFGVLDIDICGPSQPRVLGVLGEQVHQSGSGWSPVYIEDNLSLMSIGFLLGSPDDAIIWRGPKKNGMIRQFLTEVDWGQLDYLVLDTPPGTSDEHLSAATFLKVTDGRWGAVLVTTPQEVALLDVRKEITFCKKMAIPVVGVVENMSVFVCPKCATESDIFPAKTGGAERMCADMEVRYLGKLPLDPRLAKCCDEGKDFLAEHAGSPTVTALKGIVARVQEFFETDRLTCTCVKRVLT.

Residues 1-24 form a disordered region; sequence MSSAEVTAAAKPADAPEHCPGTAS. Positions 19, 33, 36, and 42 each coordinate [4Fe-4S] cluster. 72–79 contributes to the ATP binding site; it reads GKGGVGKS. 2 residues coordinate [4Fe-4S] cluster: C247 and C250.

Belongs to the Mrp/NBP35 ATP-binding proteins family. NUBP1/NBP35 subfamily. As to quaternary structure, heterotetramer of 2 NUBP1 and 2 NUBP2 chains. Requires [4Fe-4S] cluster as cofactor.

The protein resides in the cytoplasm. Component of the cytosolic iron-sulfur (Fe/S) protein assembly (CIA) machinery. Required for maturation of extramitochondrial Fe-S proteins. The NUBP1-NUBP2 heterotetramer forms a Fe-S scaffold complex, mediating the de novo assembly of an Fe-S cluster and its transfer to target apoproteins. This Culex quinquefasciatus (Southern house mosquito) protein is Cytosolic Fe-S cluster assembly factor NUBP1 homolog.